A 373-amino-acid chain; its full sequence is MSVKKINLLDLDRKGLRALFSEMGEKPFRADQLMKWVYHFGVTDFEEMNNINKVLRTKLAAKCEIVAPEIASFQKSNDGTIKFAINVGQGQEVETVYIPEEDRATLCVSSQVGCALECTFCSTGQQGFNRNLTVSEIIGQVWRVSQFLGFHKDTGDRPISNVVMMGMGEPLLNLANVIPAMDIMLDDFGFSLSKRRVTLSTSGVVPALDKLGDAIDVALAVSIHAPNDELRDVLVPVNKKYPLQEFLAGIRRYLEKSNANRGRVTVEYVMLDHINDSTDQAHELAILMKDTPCKINLIPFNPYPGSPYGRSSNSRIDRFSKVLMEHGLTVIVRKTRGDDIDAACGQLAGDIRDRTKRLAKKQMQQNQISVTME.

The active-site Proton acceptor is the E94. The region spanning 100–339 (EEDRATLCVS…VIVRKTRGDD (240 aa)) is the Radical SAM core domain. The cysteines at positions 107 and 344 are disulfide-linked. [4Fe-4S] cluster is bound by residues C114, C118, and C121. S-adenosyl-L-methionine-binding positions include 168–169 (GE), S200, 222–224 (SIH), and N301. Residue C344 is the S-methylcysteine intermediate of the active site.

This sequence belongs to the radical SAM superfamily. RlmN family. [4Fe-4S] cluster is required as a cofactor.

It is found in the cytoplasm. It carries out the reaction adenosine(2503) in 23S rRNA + 2 reduced [2Fe-2S]-[ferredoxin] + 2 S-adenosyl-L-methionine = 2-methyladenosine(2503) in 23S rRNA + 5'-deoxyadenosine + L-methionine + 2 oxidized [2Fe-2S]-[ferredoxin] + S-adenosyl-L-homocysteine. The catalysed reaction is adenosine(37) in tRNA + 2 reduced [2Fe-2S]-[ferredoxin] + 2 S-adenosyl-L-methionine = 2-methyladenosine(37) in tRNA + 5'-deoxyadenosine + L-methionine + 2 oxidized [2Fe-2S]-[ferredoxin] + S-adenosyl-L-homocysteine. Specifically methylates position 2 of adenine 2503 in 23S rRNA and position 2 of adenine 37 in tRNAs. m2A2503 modification seems to play a crucial role in the proofreading step occurring at the peptidyl transferase center and thus would serve to optimize ribosomal fidelity. This Shewanella frigidimarina (strain NCIMB 400) protein is Dual-specificity RNA methyltransferase RlmN.